We begin with the raw amino-acid sequence, 334 residues long: Glyceraldehyde-3-phosphate dehydrogenase (334 aa).

NAD(+) contacts are provided by residues 12–13 (RI), D34, and R79. Residues 150-152 (SCT), T181, 210-211 (TG), and R233 contribute to the D-glyceraldehyde 3-phosphate site. C151 functions as the Nucleophile in the catalytic mechanism. N315 is an NAD(+) binding site.

It belongs to the glyceraldehyde-3-phosphate dehydrogenase family. As to quaternary structure, homotetramer.

The protein localises to the cytoplasm. The catalysed reaction is D-glyceraldehyde 3-phosphate + phosphate + NAD(+) = (2R)-3-phospho-glyceroyl phosphate + NADH + H(+). Its pathway is carbohydrate degradation; glycolysis; pyruvate from D-glyceraldehyde 3-phosphate: step 1/5. The protein is Glyceraldehyde-3-phosphate dehydrogenase (GPD) of Wickerhamomyces ciferrii (strain ATCC 14091 / BCRC 22168 / CBS 111 / JCM 3599 / NBRC 0793 / NRRL Y-1031 F-60-10) (Yeast).